We begin with the raw amino-acid sequence, 246 residues long: Bis(5'-nucleosyl)-tetraphosphatase PrpE [asymmetrical] (246 aa).

This sequence belongs to the PrpE family. It depends on Ni(2+) as a cofactor.

It catalyses the reaction P(1),P(4)-bis(5'-guanosyl) tetraphosphate + H2O = GMP + GTP + 2 H(+). Its function is as follows. Asymmetrically hydrolyzes Ap4p to yield AMP and ATP. The sequence is that of Bis(5'-nucleosyl)-tetraphosphatase PrpE [asymmetrical] from Bacillus cereus (strain Q1).